A 707-amino-acid chain; its full sequence is Elongation factor G 2 (707 aa).

A tr-type G domain is found at glutamate 8 to alanine 290. Residues alanine 17–threonine 24, aspartate 88–histidine 92, and asparagine 142–aspartate 145 contribute to the GTP site.

Belongs to the TRAFAC class translation factor GTPase superfamily. Classic translation factor GTPase family. EF-G/EF-2 subfamily.

The protein localises to the cytoplasm. Functionally, catalyzes the GTP-dependent ribosomal translocation step during translation elongation. During this step, the ribosome changes from the pre-translocational (PRE) to the post-translocational (POST) state as the newly formed A-site-bound peptidyl-tRNA and P-site-bound deacylated tRNA move to the P and E sites, respectively. Catalyzes the coordinated movement of the two tRNA molecules, the mRNA and conformational changes in the ribosome. In Bordetella bronchiseptica (strain ATCC BAA-588 / NCTC 13252 / RB50) (Alcaligenes bronchisepticus), this protein is Elongation factor G 2.